A 358-amino-acid polypeptide reads, in one-letter code: 3-isopropylmalate dehydrogenase (358 aa).

77-90 (GPKWTNLPPDQQPE) lines the NAD(+) pocket. Substrate contacts are provided by Arg98, Arg108, Arg137, and Asp226. Residues Asp226, Asp250, and Asp254 each contribute to the Mg(2+) site. Residue 284 to 296 (GSAPDIAGKGIAN) participates in NAD(+) binding.

This sequence belongs to the isocitrate and isopropylmalate dehydrogenases family. LeuB type 1 subfamily. Homodimer. It depends on Mg(2+) as a cofactor. Mn(2+) serves as cofactor.

It is found in the cytoplasm. It carries out the reaction (2R,3S)-3-isopropylmalate + NAD(+) = 4-methyl-2-oxopentanoate + CO2 + NADH. The protein operates within amino-acid biosynthesis; L-leucine biosynthesis; L-leucine from 3-methyl-2-oxobutanoate: step 3/4. Functionally, catalyzes the oxidation of 3-carboxy-2-hydroxy-4-methylpentanoate (3-isopropylmalate) to 3-carboxy-4-methyl-2-oxopentanoate. The product decarboxylates to 4-methyl-2 oxopentanoate. The polypeptide is 3-isopropylmalate dehydrogenase (Haemophilus influenzae (strain 86-028NP)).